The following is a 65-amino-acid chain: Ferredoxin-1 (65 aa).

Residues 2–30 (AMKIDPELCTSCGDCEPVCPTNAIAPKKG) form the 4Fe-4S ferredoxin-type domain. Residues C10, C13, C16, C20, C39, C42, C51, and C55 each contribute to the [4Fe-4S] cluster site.

The cofactor is [4Fe-4S] cluster.

In terms of biological role, ferredoxins are iron-sulfur proteins that transfer electrons in a wide variety of metabolic reactions. This ferredoxin probably participates in nitrogen fixation. This Rhodobacter capsulatus (Rhodopseudomonas capsulata) protein is Ferredoxin-1 (fdxN).